A 530-amino-acid chain; its full sequence is Vesicular acetylcholine transporter (530 aa).

Residues 1–33 (MEPTAPTGQARAAATKLSEAVGAALQEPQRQRR) are Cytoplasmic-facing. The chain crosses the membrane as a helical span at residues 34–54 (LVLVIVCVALLLDNMLYMVIV). At 55–125 (PIVPDYIAHM…PTESEDVKIG (71 aa)) the chain is on the lumenal, vesicle side. Residues N89 and N96 are each glycosylated (N-linked (GlcNAc...) asparagine). The chain crosses the membrane as a helical span at residues 126 to 146 (VLFASKAILQLLVNPLSGPFI). Residues 147–152 (DRMSYD) are Cytoplasmic-facing. A helical membrane pass occupies residues 153–173 (VPLLIGLGVMFASTVMFAFAE). Topologically, residues 174–182 (DYATFFAAR) are lumenal, vesicle. Residues 183 to 203 (SLQGLGSAFADTSGIAMIADK) form a helical membrane-spanning segment. At 204-213 (YPEEPERSRA) the chain is on the cytoplasmic side. Residues 214-234 (LGVALAFISFGSLVAPPFGGI) form a helical membrane-spanning segment. Over 235–242 (LYEFAGKR) the chain is Lumenal, vesicle. Residues 243-263 (VPFLVLAAVSLFDALLLLAVA) traverse the membrane as a helical segment. Residues 264-288 (KPFSAAARARANLPVGTPIHRLMLD) are Cytoplasmic-facing. Residues 289–309 (PYIAVVAGALTTCNIPLAFLE) traverse the membrane as a helical segment. The Lumenal, vesicle segment spans residues 310 to 325 (PTIATWMKHTMAASEW). The chain crosses the membrane as a helical span at residues 326–346 (EMGMVWLPAFVPHVLGVYLTV). At 347 to 356 (RLAARYPHLQ) the chain is on the cytoplasmic side. The helical transmembrane segment at 357–377 (WLYGALGLAVIGVSSCVVPAC) threads the bilayer. The Lumenal, vesicle portion of the chain corresponds to 378–388 (RSFAPLVVSLC). A helical membrane pass occupies residues 389–409 (GLCFGIALVDTALLPTLAFLV). Topologically, residues 410-422 (DVRHVSVYGSVYA) are cytoplasmic. A helical transmembrane segment spans residues 423 to 443 (IADISYSVAYALGPIVAGHIV). At 444 to 447 (HSLG) the chain is on the lumenal, vesicle side. Residues 448-468 (FEQLSLGMGLANLLYAPVLLL) traverse the membrane as a helical segment. Residues 469-530 (LRNVGLLTRS…EDDYNYYSRS (62 aa)) lie on the Cytoplasmic side of the membrane. A mediates interaction with SEC14L1 region spans residues 471-530 (NVGLLTRSRSERDVLLDEPPQGLYDAVRLREVQGKDGGEPCSPPGPFDGCEDDYNYYSRS). The segment at 504-530 (GKDGGEPCSPPGPFDGCEDDYNYYSRS) is disordered.

Belongs to the major facilitator superfamily. Vesicular transporter family. Interacts with SEC14L1. In terms of tissue distribution, expressed in the spinal cord, brain (excluding the cerebellum), brain stem and cholinergic tissues. Not expressed in peripheral tissues such as liver and kidney.

The protein resides in the cytoplasmic vesicle. Its subcellular location is the secretory vesicle. The protein localises to the synaptic vesicle membrane. The enzyme catalyses acetylcholine(out) + 2 H(+)(in) = acetylcholine(in) + 2 H(+)(out). The catalysed reaction is choline(in) + 2 H(+)(out) = choline(out) + 2 H(+)(in). It catalyses the reaction serotonin(in) + 2 H(+)(out) = serotonin(out) + 2 H(+)(in). In terms of biological role, electrogenic antiporter that exchanges one cholinergic neurotransmitter, acetylcholine or choline, with two intravesicular protons across the membrane of synaptic vesicles. Uses the electrochemical proton gradient established by the V-type proton-pump ATPase to store neurotransmitters inside the vesicles prior to their release via exocytosis. Determines cholinergic vesicular quantal size at presynaptic nerve terminals in developing neuro-muscular junctions with an impact on motor neuron differentiation and innervation pattern. Part of forebrain cholinergic system, regulates hippocampal synapse transmissions that underlie spatial memory formation. Can transport serotonin. The chain is Vesicular acetylcholine transporter (Slc18a3) from Mus musculus (Mouse).